A 200-amino-acid chain; its full sequence is MALTMLLLLVAAALTLIETRAGQHSLQYFHTAVSRPGLGEPWFISVGYVDDTQFVRFDSDAENPRMEPRARWMEQEGPEYWERETQIAKGHEQSFRGSLRTAQSYYNQSKGGSHTLQWMYGCDMGSDGRLLRGYLQFAYEGRDYIALNEDLKTWTAVDMAAQITRRKWEQAGIAEKDQAYLEGTCMQSLRRYLELGKETL.

The first 21 residues, 1-21, serve as a signal peptide directing secretion; that stretch reads MALTMLLLLVAAALTLIETRA. Positions 22–111 are alpha-1; sequence GQHSLQYFHT…AQSYYNQSKG (90 aa). Residues 22-200 are Extracellular-facing; that stretch reads GQHSLQYFHT…RYLELGKETL (179 aa). An N-linked (GlcNAc...) asparagine glycan is attached at N107. The tract at residues 112-200 is alpha-2; that stretch reads GSHTLQWMYG…RYLELGKETL (89 aa). C122 and C185 are disulfide-bonded.

Belongs to the MHC class I family. As to quaternary structure, heterodimer of an alpha chain and a beta chain (beta-2-microglobulin).

Its subcellular location is the membrane. In terms of biological role, involved in the presentation of foreign antigens to the immune system. In Mus musculus (Mouse), this protein is H-2 class I histocompatibility antigen, Q9 alpha chain (H2-Q9).